A 154-amino-acid chain; its full sequence is Transcription antitermination protein NusB (154 aa).

This sequence belongs to the NusB family.

In terms of biological role, involved in transcription antitermination. Required for transcription of ribosomal RNA (rRNA) genes. Binds specifically to the boxA antiterminator sequence of the ribosomal RNA (rrn) operons. This chain is Transcription antitermination protein NusB, found in Enterococcus faecalis (strain ATCC 700802 / V583).